The sequence spans 293 residues: Ribosomal protein L11 methyltransferase (293 aa).

S-adenosyl-L-methionine contacts are provided by Thr-145, Gly-166, Asp-188, and Asn-230.

It belongs to the methyltransferase superfamily. PrmA family.

It is found in the cytoplasm. It catalyses the reaction L-lysyl-[protein] + 3 S-adenosyl-L-methionine = N(6),N(6),N(6)-trimethyl-L-lysyl-[protein] + 3 S-adenosyl-L-homocysteine + 3 H(+). In terms of biological role, methylates ribosomal protein L11. In Shewanella halifaxensis (strain HAW-EB4), this protein is Ribosomal protein L11 methyltransferase.